The primary structure comprises 600 residues: NADPH-dependent diflavin oxidoreductase 1 (600 aa).

One can recognise a Flavodoxin-like domain in the interval 6–150; the sequence is LLILYGSQTG…VVDPWLKDLW (145 aa). Residues 12 to 17, 59 to 62, 97 to 106, and aspartate 132 each bind FMN; these read SQTGTA, ATTG, and LGDSSYPKFN. The region spanning 210 to 449 is the FAD-binding FR-type domain; sequence IHPFLAPVLS…WVKKGSMKFP (240 aa). Residues arginine 354, 386-389, and 420-423 each bind FAD; these read RAFS and GLCS. NADP(+) is bound by residues threonine 463, 518 to 519, and 524 to 528; these read SR and KIYVQ. Tryptophan 599 contacts FAD.

Belongs to the NADPH-dependent diflavin oxidoreductase NDOR1 family. It in the N-terminal section; belongs to the flavodoxin family. The protein in the C-terminal section; belongs to the flavoprotein pyridine nucleotide cytochrome reductase family. As to quaternary structure, interacts with ciapin1; as part of the cytosolic iron-sulfur (Fe-S) protein assembly (CIA) machinery. The cofactor is FAD. FMN serves as cofactor.

It localises to the cytoplasm. It is found in the perinuclear region. It catalyses the reaction 2 oxidized [2Fe-2S]-[protein] + NADPH = 2 reduced [2Fe-2S]-[protein] + NADP(+) + H(+). In terms of biological role, NADPH-dependent reductase which is a central component of the cytosolic iron-sulfur (Fe-S) protein assembly (CIA) machinery. Transfers electrons from NADPH via its FAD and FMN prosthetic groups to the [2Fe-2S] cluster of ciapin1, another key component of the CIA machinery. In turn, this reduced cluster provides electrons for assembly of cytosolic iron-sulfur cluster proteins. It can also reduce the [2Fe-2S] cluster of cisd1 and activate this protein implicated in Fe/S cluster repair. The protein is NADPH-dependent diflavin oxidoreductase 1 of Xenopus laevis (African clawed frog).